Reading from the N-terminus, the 202-residue chain is Small ribosomal subunit protein uS4c (202 aa).

The region spanning 90-153 (MRLDNVIFRL…KSETIISKNI (64 aa)) is the S4 RNA-binding domain.

This sequence belongs to the universal ribosomal protein uS4 family. As to quaternary structure, part of the 30S ribosomal subunit. Contacts protein S5. The interaction surface between S4 and S5 is involved in control of translational fidelity.

Its subcellular location is the plastid. The protein resides in the chloroplast. Functionally, one of the primary rRNA binding proteins, it binds directly to 16S rRNA where it nucleates assembly of the body of the 30S subunit. With S5 and S12 plays an important role in translational accuracy. The chain is Small ribosomal subunit protein uS4c (rps4) from Arbusculohypopterygium arbuscula (Moss).